The primary structure comprises 400 residues: ATP-dependent RNA helicase fal-1 (400 aa).

A Q motif motif is present at residues 26–54; that stretch reads PTFESMSLKESLLRGIYAYGYESPSAVQS. In terms of domain architecture, Helicase ATP-binding spans 57–227; it reads IVQICKGRDT…TKFMTDPVRI (171 aa). Residue 70–77 participates in ATP binding; it reads AQSGTGKT. Positions 175–178 match the DEAD box motif; it reads DEAD. The 162-residue stretch at 238-399 folds into the Helicase C-terminal domain; the sequence is GLKQYFIAVE…EMPMNVADLI (162 aa).

It belongs to the DEAD box helicase family. DDX48/FAL1 subfamily.

It localises to the nucleus. The protein resides in the nucleolus. The catalysed reaction is ATP + H2O = ADP + phosphate + H(+). In terms of biological role, ATP-dependent RNA helicase involved in 40S ribosomal subunit biogenesis. Required for the processing and cleavage of 35S pre-rRNA at sites A0, A1, and A2, leading to mature 18S rRNA. The protein is ATP-dependent RNA helicase fal-1 (fal-1) of Neurospora crassa (strain ATCC 24698 / 74-OR23-1A / CBS 708.71 / DSM 1257 / FGSC 987).